Reading from the N-terminus, the 211-residue chain is Large ribosomal subunit protein bL25 (211 aa).

It belongs to the bacterial ribosomal protein bL25 family. CTC subfamily. Part of the 50S ribosomal subunit; part of the 5S rRNA/L5/L18/L25 subcomplex. Contacts the 5S rRNA. Binds to the 5S rRNA independently of L5 and L18.

This is one of the proteins that binds to the 5S RNA in the ribosome where it forms part of the central protuberance. The protein is Large ribosomal subunit protein bL25 of Anaplasma phagocytophilum (strain HZ).